The primary structure comprises 96 residues: Phosphoribosyl-ATP pyrophosphatase (96 aa).

It belongs to the PRA-PH family.

It is found in the cytoplasm. It carries out the reaction 1-(5-phospho-beta-D-ribosyl)-ATP + H2O = 1-(5-phospho-beta-D-ribosyl)-5'-AMP + diphosphate + H(+). It functions in the pathway amino-acid biosynthesis; L-histidine biosynthesis; L-histidine from 5-phospho-alpha-D-ribose 1-diphosphate: step 2/9. The sequence is that of Phosphoribosyl-ATP pyrophosphatase from Methanococcus maripaludis (strain C5 / ATCC BAA-1333).